A 301-amino-acid polypeptide reads, in one-letter code: D-psicose 3-epimerase (301 aa).

Tyr16 contributes to the substrate binding site. Residue Glu162 is the Proton donor/acceptor of the active site. Residue Glu162 coordinates Mn(2+). Substrate-binding positions include Glu168 and 195–198 (DTFH). Mn(2+) is bound by residues Asp195 and His221. A substrate-binding site is contributed by Arg227. Glu256 serves as the catalytic Proton donor/acceptor. Residue Glu256 coordinates Mn(2+).

The protein belongs to the hyi family. In terms of assembly, homotetramer. Requires Mn(2+) as cofactor. The cofactor is Co(2+).

The catalysed reaction is D-allulose = keto-D-fructose. Completely inhibited by EDTA and partially inhibited by Zn(2+), Mg(2+) and Cu(2+). Functionally, involved in the biosynthesis of D-psicose. Catalyzes the reversible epimerization of D-fructose at the C3 position to yield D-psicose. The enzyme is highly specific for D-psicose and shows very low activity with D-tagatose. The sequence is that of D-psicose 3-epimerase from Enterocloster bolteae (strain ATCC BAA-613 / DSM 15670 / CCUG 46953 / JCM 12243 / WAL 16351) (Clostridium bolteae).